Reading from the N-terminus, the 379-residue chain is Cytochrome b (379 aa).

The next 4 membrane-spanning stretches (helical) occupy residues 33–53, 77–98, 113–133, and 178–198; these read FGSLLGMCLVIQILTGLFLAM, WLIRYLHANGASMFFICLFIHV, WNIGIILFLTTMATAFVGYVL, and FFAFHFILPFIIAAFALVHLL. The heme b site is built by histidine 83 and histidine 97. 2 residues coordinate heme b: histidine 182 and histidine 196. Histidine 201 is a binding site for a ubiquinone. The next 4 helical transmembrane spans lie at 226 to 246, 288 to 308, 320 to 340, and 347 to 367; these read TKDLLGIFLLLLVLMILALFF, LGGVLALILSILILAAFPLLN, VTQVIYWXXIANLLVLTWIGG, and FTMIGQIASITYFAIXIILIP.

The protein belongs to the cytochrome b family. In terms of assembly, the cytochrome bc1 complex contains 11 subunits: 3 respiratory subunits (MT-CYB, CYC1 and UQCRFS1), 2 core proteins (UQCRC1 and UQCRC2) and 6 low-molecular weight proteins (UQCRH/QCR6, UQCRB/QCR7, UQCRQ/QCR8, UQCR10/QCR9, UQCR11/QCR10 and a cleavage product of UQCRFS1). This cytochrome bc1 complex then forms a dimer. Requires heme b as cofactor.

It is found in the mitochondrion inner membrane. Its function is as follows. Component of the ubiquinol-cytochrome c reductase complex (complex III or cytochrome b-c1 complex) that is part of the mitochondrial respiratory chain. The b-c1 complex mediates electron transfer from ubiquinol to cytochrome c. Contributes to the generation of a proton gradient across the mitochondrial membrane that is then used for ATP synthesis. In Akodon lutescens puer (Altiplano grass mouse), this protein is Cytochrome b (MT-CYB).